The primary structure comprises 1081 residues: Protein QUIRKY (1081 aa).

The C2 1 domain occupies 1 to 124 (MNTTPFHSDP…SRRGEEGLVY (124 aa)). 2 disordered regions span residues 154–198 (DTAG…MNIP) and 238–323 (PQHV…MEKK). Over residues 163–176 (QQQQQQQQFHPPQQ) the composition is skewed to low complexity. Over residues 248–257 (NHPHRNDNHP) the composition is skewed to basic and acidic residues. Residues 258 to 268 (QRPPSPPPPPS) are compositionally biased toward pro residues. C2 domains follow at residues 318–440 (TTME…PQWY), 477–605 (SSDA…SKWH), and 652–778 (VCSD…TNSY). Glu351, Ser352, Asp408, and Ser413 together coordinate Ca(2+). Transmembrane regions (helical) follow at residues 879–899 (WYRIVGVLAWAVGLAKWLDNI), 916–936 (LVLVWYPDLVVPTAFLYVVMI), and 1024–1044 (LFIAICLVITIVLYAVPAKMV).

It belongs to the MCTP family. In terms of assembly, interacts with SUB/SCM and POQ at the plasma membrane. Binds to SUB/SCM at plasmodesmata (PD) in root epidermal cells to promote tissue morphogenesis. Ca(2+) serves as cofactor. In terms of tissue distribution, observed mainly in flowers, and, to a lower extent, in seedlings, roots, shoots, leaves, stems and inflorescences. Expressed in the vascular tissues of roots, cotyledons and rosette leaves. Accumulates in roots meristems.

Its subcellular location is the cell membrane. The protein localises to the cytoplasm. It localises to the golgi apparatus membrane. It is found in the cell junction. The protein resides in the plasmodesma. May be involved in Ca 2(+)-dependent signaling and membrane trafficking. Plays a role in fruit dehiscence. Components of the machinery involved in organ development mediated by the receptor-like kinase STRUBBELIG (SUB). Collaboratively with SUB and POQ, regulates cell growth anisotropy during gynoecium development, thus linking together cell-cell communication and cellular growth. Together with SUB/SCM, links RLK-dependent signal transduction and intercellular communication mediated by plasmodesmata (PD) to regulate tissue morphogenesis. May function as a signaling molecule by regulating the trafficking of other regulators. In Arabidopsis thaliana (Mouse-ear cress), this protein is Protein QUIRKY.